A 630-amino-acid chain; its full sequence is A-type voltage-gated potassium channel KCND2 (630 aa).

Over 1-184 (MAAGVAAWLP…FENPHTSTMA (184 aa)) the chain is Cytoplasmic. Residues 2-20 (AAGVAAWLPFARAAAIGWM) are interaction with KCNIP1, KCNIP2, and other family members. Residue Thr38 is modified to Phosphothreonine. Residues 71–90 (ERDFFYHPETQQYFFDRDPD) form an interaction with KCNIP1 region. Zn(2+)-binding residues include His105, Cys111, Cys132, and Cys133. A helical membrane pass occupies residues 185-206 (LVFYYVTGFFIAVSVIANVVET). Topologically, residues 207–226 (VPCGSSPGHIKELPCGERYA) are extracellular. Residues 227-249 (VAFFCLDTACVMIFTVEYLLRLA) form a helical membrane-spanning segment. Residues 250-256 (AAPSRYR) are Cytoplasmic-facing. Residues 257 to 281 (FVRSVMSIIDVVAILPYYIGLVMTD) traverse the membrane as a helical segment. Residues 282–287 (NEDVSG) lie on the Extracellular side of the membrane. Residues 288–307 (AFVTLRVFRVFRIFKFSRHS) form a helical; Voltage-sensor membrane-spanning segment. The Cytoplasmic segment spans residues 308-321 (QGLRILGYTLKSCA). An S4-S5 linker region spans residues 308 to 321 (QGLRILGYTLKSCA). Residues 322-345 (SELGFLLFSLTMAIIIFATVMFYA) traverse the membrane as a helical segment. Residues 346 to 357 (EKGSSASKFTSI) lie on the Extracellular side of the membrane. The helical intramembrane region spans 358-369 (PAAFWYTIVTMT). Positions 370, 371, 372, and 373 each coordinate K(+). Residues 370 to 375 (TLGYGD) carry the Selectivity filter motif. The stretch at 370–377 (TLGYGDMV) is an intramembrane region. The Extracellular portion of the chain corresponds to 378-380 (PKT). A helical transmembrane segment spans residues 381–403 (IAGKIFGSICSLSGVLVIALPVP). Residues 404-630 (VIVSNFSRIY…GGNIVRVSAL (227 aa)) lie on the Cytoplasmic side of the membrane. Ser438 is subject to Phosphoserine. The segment at 474–489 (FETQHHHLLHCLEKTT) is required for dendritic targeting. The interval 474-630 (FETQHHHLLH…GGNIVRVSAL (157 aa)) is important for normal channel activation and inactivation, for interaction with KCNIP2, and probably other family members as well. Phosphoserine occurs at positions 548, 552, 572, and 575. A disordered region spans residues 600–623 (IPTPPVTTPEGDDRPESPEYSGGN). Phosphothreonine is present on residues Thr602 and Thr607. At Ser616 the chain carries Phosphoserine. Residues 627-630 (VSAL) carry the PDZ-binding motif.

This sequence belongs to the potassium channel family. D (Shal) (TC 1.A.1.2) subfamily. Kv4.2/KCND2 sub-subfamily. In terms of assembly, homotetramer or heterotetramer with KCND1 or KCND3. Associates with the regulatory subunits KCNIP1, KCNIP2, KCNIP3 and KCNIP4. Interacts with DPP6, DPP10, DLG4 and DLG1. In vivo, probably exists as heteromeric complex containing variable proportions of KCND1, KCND2, KCND3, KCNIP1, KCNIP2, KCNIP3, KCNIP4, DPP6 and DPP10. The tetrameric channel can associate with up to four regulatory subunits, such as KCNIP2 or KCNIP4. Interaction with KCNIP3 promotes tetramerization and formation of a functional potassium channel. Interaction with four KCNIP4 chains does not reduce interaction with DPP10. Probably part of a complex consisting of KCNIP1, KCNIP2 isoform 3 and KCND2. Interacts with FLNA and FLNC. Interacts with NCS1/FREQ. Identified in a complex with cAMP-dependent protein kinase (PKA), CAV3, AKAP6 and KCND3 in cardiac myocytes. Interacts (via S1 and S2 helices) with DPP6; this interaction stabilizes the conformation of the S1-S2 helices and facilitates S4 conformational change, including S4 sliding up and down, thereby accelerating activation, inactivation, and recovery. In terms of processing, phosphorylation at Ser-438 in response to MAPK activation is increased in stimulated dendrites. Interaction with KCNIP2 and DPP6 propomtes phosphorylation by PKA at Ser-552. Phosphorylation at Ser-552 has no effect on interaction with KCNIP3, but is required for the regulation of channel activity by KCNIP3. Phosphorylation at Ser-552 leads to KCND2 internalization. Phosphorylated by MAPK in response to signaling via the metabotropic glutamate receptor GRM5. Phosphorylation at Ser-616 is required for the down-regulation of neuronal A-type currents in response to signaling via GRM5. Detected in brain frontal cortex.

Its subcellular location is the cell membrane. It is found in the cell projection. It localises to the dendrite. The protein localises to the synapse. The protein resides in the perikaryon. Its subcellular location is the postsynaptic cell membrane. It is found in the dendritic spine. It localises to the sarcolemma. The protein localises to the cell junction. The protein resides in the membrane. Its subcellular location is the caveola. It carries out the reaction K(+)(in) = K(+)(out). Functionally, voltage-gated potassium channel that mediates transmembrane potassium transport in excitable membranes, primarily in the brain. Mediates the major part of the dendritic A-type current I(SA) in brain neurons. This current is activated at membrane potentials that are below the threshold for action potentials. It regulates neuronal excitability, prolongs the latency before the first spike in a series of action potentials, regulates the frequency of repetitive action potential firing, shortens the duration of action potentials and regulates the back-propagation of action potentials from the neuronal cell body to the dendrites. Contributes to the regulation of the circadian rhythm of action potential firing in suprachiasmatic nucleus neurons, which regulates the circadian rhythm of locomotor activity. Functions downstream of the metabotropic glutamate receptor GRM5 and plays a role in neuronal excitability and in nociception mediated by activation of GRM5. Mediates the transient outward current I(to) in rodent heart left ventricle apex cells, but not in human heart, where this current is mediated by another family member. Forms tetrameric potassium-selective channels through which potassium ions pass in accordance with their electrochemical gradient. The channel alternates between opened and closed conformations in response to the voltage difference across the membrane. Can form functional homotetrameric channels and heterotetrameric channels that contain variable proportions of KCND2 and KCND3; channel properties depend on the type of pore-forming alpha subunits that are part of the channel. In vivo, membranes probably contain a mixture of heteromeric potassium channel complexes. Interaction with specific isoforms of the regulatory subunits KCNIP1, KCNIP2, KCNIP3 or KCNIP4 strongly increases expression at the cell surface and thereby increases channel activity; it modulates the kinetics of channel activation and inactivation, shifts the threshold for channel activation to more negative voltage values, shifts the threshold for inactivation to less negative voltages and accelerates recovery after inactivation. Likewise, interaction with DPP6 or DPP10 promotes expression at the cell membrane and regulates both channel characteristics and activity. Upon depolarization, the channel goes from a resting closed state (C state) to an activated but non-conducting state (C* state), from there, the channel may either inactivate (I state) or open (O state). The sequence is that of A-type voltage-gated potassium channel KCND2 from Oryctolagus cuniculus (Rabbit).